A 180-amino-acid polypeptide reads, in one-letter code: Large ribosomal subunit protein uL6 (180 aa).

It belongs to the universal ribosomal protein uL6 family. In terms of assembly, part of the 50S ribosomal subunit.

Functionally, this protein binds to the 23S rRNA, and is important in its secondary structure. It is located near the subunit interface in the base of the L7/L12 stalk, and near the tRNA binding site of the peptidyltransferase center. In Flavobacterium johnsoniae (strain ATCC 17061 / DSM 2064 / JCM 8514 / BCRC 14874 / CCUG 350202 / NBRC 14942 / NCIMB 11054 / UW101) (Cytophaga johnsonae), this protein is Large ribosomal subunit protein uL6.